Here is a 29-residue protein sequence, read N- to C-terminus: Neurotoxin BmK A3-6 (29 aa).

Contains 3 disulfide bonds. Expressed by the venom gland.

The protein resides in the secreted. The protein is Neurotoxin BmK A3-6 of Olivierus martensii (Manchurian scorpion).